Reading from the N-terminus, the 358-residue chain is Ribosomal RNA large subunit methyltransferase M (358 aa).

S-adenosyl-L-methionine-binding positions include Ser-187, Cys-220–Gly-223, Asp-239, Asp-259, and Asp-276. Lys-305 functions as the Proton acceptor in the catalytic mechanism.

The protein belongs to the class I-like SAM-binding methyltransferase superfamily. RNA methyltransferase RlmE family. RlmM subfamily. As to quaternary structure, monomer.

The protein localises to the cytoplasm. The catalysed reaction is cytidine(2498) in 23S rRNA + S-adenosyl-L-methionine = 2'-O-methylcytidine(2498) in 23S rRNA + S-adenosyl-L-homocysteine + H(+). Catalyzes the 2'-O-methylation at nucleotide C2498 in 23S rRNA. In Shewanella woodyi (strain ATCC 51908 / MS32), this protein is Ribosomal RNA large subunit methyltransferase M.